A 346-amino-acid polypeptide reads, in one-letter code: Biotin synthase (346 aa).

One can recognise a Radical SAM core domain in the interval 40-264; it reads NEVQVSTLLS…MMPHSHVRLS (225 aa). Residues Cys-55, Cys-59, and Cys-62 each contribute to the [4Fe-4S] cluster site. Residues Cys-99, Cys-130, Cys-190, and Arg-262 each coordinate [2Fe-2S] cluster.

The protein belongs to the radical SAM superfamily. Biotin synthase family. In terms of assembly, homodimer. [4Fe-4S] cluster serves as cofactor. It depends on [2Fe-2S] cluster as a cofactor.

It catalyses the reaction (4R,5S)-dethiobiotin + (sulfur carrier)-SH + 2 reduced [2Fe-2S]-[ferredoxin] + 2 S-adenosyl-L-methionine = (sulfur carrier)-H + biotin + 2 5'-deoxyadenosine + 2 L-methionine + 2 oxidized [2Fe-2S]-[ferredoxin]. Its pathway is cofactor biosynthesis; biotin biosynthesis; biotin from 7,8-diaminononanoate: step 2/2. Catalyzes the conversion of dethiobiotin (DTB) to biotin by the insertion of a sulfur atom into dethiobiotin via a radical-based mechanism. This chain is Biotin synthase, found in Colwellia psychrerythraea (strain 34H / ATCC BAA-681) (Vibrio psychroerythus).